A 103-amino-acid polypeptide reads, in one-letter code: Small ribosomal subunit protein uS10 (103 aa).

It belongs to the universal ribosomal protein uS10 family. As to quaternary structure, part of the 30S ribosomal subunit.

Involved in the binding of tRNA to the ribosomes. This Chlorobium phaeobacteroides (strain DSM 266 / SMG 266 / 2430) protein is Small ribosomal subunit protein uS10.